A 637-amino-acid polypeptide reads, in one-letter code: DNA mismatch repair protein MutL (637 aa).

The protein belongs to the DNA mismatch repair MutL/HexB family.

In terms of biological role, this protein is involved in the repair of mismatches in DNA. It is required for dam-dependent methyl-directed DNA mismatch repair. May act as a 'molecular matchmaker', a protein that promotes the formation of a stable complex between two or more DNA-binding proteins in an ATP-dependent manner without itself being part of a final effector complex. This Actinobacillus succinogenes (strain ATCC 55618 / DSM 22257 / CCUG 43843 / 130Z) protein is DNA mismatch repair protein MutL.